A 223-amino-acid polypeptide reads, in one-letter code: Peroxynitrite isomerase 1 (223 aa).

The GXWXGXG motif lies at 69–75 (GVWRGEG). The heme b site is built by lysine 186 and histidine 213.

This sequence belongs to the nitrobindin family. Homodimer. Heme b serves as cofactor.

The enzyme catalyses peroxynitrite = nitrate. The protein operates within nitrogen metabolism. Its function is as follows. Heme-binding protein able to scavenge peroxynitrite and to protect free L-tyrosine against peroxynitrite-mediated nitration, by acting as a peroxynitrite isomerase that converts peroxynitrite to nitrate. Therefore, this protein likely plays a role in peroxynitrite sensing and in the detoxification of reactive nitrogen and oxygen species (RNS and ROS, respectively). Is able to bind nitric oxide (NO) in vitro, but may act as a sensor of peroxynitrite levels in vivo. This is Peroxynitrite isomerase 1 from Mycobacterium marinum (strain ATCC BAA-535 / M).